A 763-amino-acid polypeptide reads, in one-letter code: MRPTPLLRLALFLVLPSSLGGERCPSPPCECRQEDDFRVTCKDIQSIPSLPPSTQTLKFIETHLKTIPSRAFSNLPNISRIYLSIDATLQQLESHSFYNLSKVTHIEIRNTRSLTYIDSGALKELPLLKFLGIFNTGLRVFPDLTKIYSTDVFFILEITDNPYMTSIPANAFQGLCNETLTLKLYNNGFTSIQGHAFNGTKLDAVYLNKNKYLTVIGQDAFAGVYSGPTLLDISYTSVTALPSKGLEHLKELIARNTWTLRKLPLSLSFLHLTRADLSYPSHCCAFKNQKKIRGILQSLMCNESSIRGLRQRKSASALNGPFYQEYEDLGDGSAGYKENSKFQDTQSNSHYYVFFEEQEDEIIGFGQQLKNPQEETLQAFDSHYDYTVCGGSEDMVCTPKSDEFNPCEDIMGYKFLRIVVWFVSLLALLGNVFVLVILLTSHYKLTVPRFLMCNLAFADFCMGLYLLLIASVDLYTQSEYYNHAIDWQTGPGCNTAGFFTVFASELSVYTLTVITLERWHAITFAMRLDRKIRLWHAYVIMLGGWVCCFLLALLPLVGISSYAKVSICLPMDTETPLALAYIILVLLLNIIAFIIVCACYVKIYITVRNPHYNPGDKDTRIAKRMAVLIFTDFMCMAPISFYALSALMNKPLITVTNSKILLVLFYPLNSCANPFLYAIFTKAFQRDVFMLLSKFGICKRQAQAYRGQRVSPKNSTGIRVQKVPPDVRQSLPNVQDDYELLENSHLTPKQQDQTSKEYKRTVL.

The first 21 residues, 1 to 21 (MRPTPLLRLALFLVLPSSLGG), serve as a signal peptide directing secretion. The Extracellular segment spans residues 22–412 (ERCPSPPCEC…EFNPCEDIMG (391 aa)). Cysteines 31 and 41 form a disulfide. The LRR 1 repeat unit spans residues 51-74 (PPSTQTLKFIETHLKTIPSRAFSN). N-linked (GlcNAc...) asparagine glycans are attached at residues N77 and N99. LRR repeat units follow at residues 125 to 150 (LPLL…IYST), 151 to 174 (DVFF…AFQG), 176 to 199 (CNET…AFNG), 201 to 223 (KLDA…AFAG), and 225 to 248 (YSGP…GLEH). N177 and N198 each carry an N-linked (GlcNAc...) asparagine glycan. N302 is a glycosylation site (N-linked (GlcNAc...) asparagine). Y384 carries the post-translational modification Sulfotyrosine. Residues 413–440 (YKFLRIVVWFVSLLALLGNVFVLVILLT) traverse the membrane as a helical segment. Over 441–449 (SHYKLTVPR) the chain is Cytoplasmic. The chain crosses the membrane as a helical span at residues 450–472 (FLMCNLAFADFCMGLYLLLIASV). The Extracellular segment spans residues 473–493 (DLYTQSEYYNHAIDWQTGPGC). The cysteines at positions 493 and 568 are disulfide-linked. The helical transmembrane segment at 494-516 (NTAGFFTVFASELSVYTLTVITL) threads the bilayer. Residues 517 to 536 (ERWHAITFAMRLDRKIRLWH) lie on the Cytoplasmic side of the membrane. Residues 537–559 (AYVIMLGGWVCCFLLALLPLVGI) traverse the membrane as a helical segment. Residues 560–579 (SSYAKVSICLPMDTETPLAL) lie on the Extracellular side of the membrane. Residues 580 to 601 (AYIILVLLLNIIAFIIVCACYV) traverse the membrane as a helical segment. The Cytoplasmic portion of the chain corresponds to 602 to 624 (KIYITVRNPHYNPGDKDTRIAKR). Residues 625–648 (MAVLIFTDFMCMAPISFYALSALM) traverse the membrane as a helical segment. The Extracellular segment spans residues 649–659 (NKPLITVTNSK). Residues 660–681 (ILLVLFYPLNSCANPFLYAIFT) traverse the membrane as a helical segment. The Cytoplasmic segment spans residues 682–763 (KAFQRDVFML…TSKEYKRTVL (82 aa)). The disordered stretch occupies residues 742–763 (ENSHLTPKQQDQTSKEYKRTVL). Residues 744–753 (SHLTPKQQDQ) are compositionally biased toward polar residues. Positions 754 to 763 (TSKEYKRTVL) are enriched in basic and acidic residues. Residues 761–763 (TVL) carry the PDZ-binding motif.

Belongs to the G-protein coupled receptor 1 family. FSH/LSH/TSH subfamily. In terms of assembly, interacts with heterodimer GPHA2:GPHB5; this interaction stimulates cAMP production. Interacts (via the PDZ-binding motif) with SCRIB; regulates TSHR trafficking and function. Post-translationally, glycosylated. In terms of processing, sulfated. Sulfation on Tyr-384 plays a role in thyrotropin receptor binding and activation.

It localises to the cell membrane. Its subcellular location is the basolateral cell membrane. Functionally, receptor for the thyroid-stimulating hormone (TSH) or thyrotropin. Also acts as a receptor for the heterodimeric glycoprotein hormone (GPHA2:GPHB5) or thyrostimulin. The activity of this receptor is mediated by G proteins which activate adenylate cyclase. Plays a central role in controlling thyroid cell metabolism. The chain is Thyrotropin receptor (TSHR) from Bos taurus (Bovine).